We begin with the raw amino-acid sequence, 114 residues long: INGDAKGIVFFEQETSEAPVKVTGEVLGLAKGLHGFHVHEFGDNTNGCMSSGPHYNPRNKEHGAPTDENRHLGDLGNIQAAGDSPTAVSITDSKITLFGADSIIGRTVVVHADA.

3 residues coordinate Cu cation: His-37, His-39, and His-54. A disordered region spans residues 49-73 (MSSGPHYNPRNKEHGAPTDENRHLG). Residues His-54, His-62, His-71, and Asp-74 each contribute to the Zn(2+) site. Residues 58–73 (RNKEHGAPTDENRHLG) are compositionally biased toward basic and acidic residues. His-111 lines the Cu cation pocket.

It belongs to the Cu-Zn superoxide dismutase family. Homodimer. Cu cation is required as a cofactor. Requires Zn(2+) as cofactor.

The protein localises to the cytoplasm. It carries out the reaction 2 superoxide + 2 H(+) = H2O2 + O2. Functionally, destroys radicals which are normally produced within the cells and which are toxic to biological systems. This is Superoxide dismutase [Cu-Zn] from Drosophila madeirensis (Fruit fly).